Reading from the N-terminus, the 391-residue chain is MEKVGVLLMNLGGPERITDVGPFLYNLFSDPEIIRLPVPAFQKPLAWLISTLRSTTSQQAYLSIGGGSPIRRITEQQARELQSKLRDKGLNVTTYIAMRYWHPFTESAIADMKADGVDQIVVLPLYPHFSISTSGSSFRELKKLRDSDSEFQKIPMRCVRSWFSQSGYLKSMVELISEQISLCESPDSAHIFFTAHGVPKSYVEEAGDPYKEQIEDCSLLIIDELEKYLGHTNPYTLSYQSRVGPVEWLKPYTEEVLTDLGKAKVNDLIVVPISFVGEHIETLQEIDIEYKEIAEKAGIVNFRRVKALNTHPTFIDGLSELVVSCLEGPIINIEKASELPEKVKLYPQEKWQWGWNNSSEVWNGRVAMIVFLILFIELISGSGPLHKLGIL.

Fe cation is bound by residues His-196 and Glu-281.

It belongs to the ferrochelatase family.

It localises to the cytoplasm. It catalyses the reaction heme b + 2 H(+) = protoporphyrin IX + Fe(2+). It participates in porphyrin-containing compound metabolism; protoheme biosynthesis; protoheme from protoporphyrin-IX: step 1/1. Functionally, catalyzes the ferrous insertion into protoporphyrin IX. The polypeptide is Ferrochelatase (Prochlorococcus marinus subsp. pastoris (strain CCMP1986 / NIES-2087 / MED4)).